Consider the following 236-residue polypeptide: Ribose-5-phosphate isomerase A (236 aa).

Substrate is bound by residues 28–31, 83–86, and 96–99; these read TGST, DGAD, and KGGG. The active-site Proton acceptor is the Glu105. Lys123 is a binding site for substrate.

It belongs to the ribose 5-phosphate isomerase family. In terms of assembly, homodimer.

The enzyme catalyses aldehydo-D-ribose 5-phosphate = D-ribulose 5-phosphate. It participates in carbohydrate degradation; pentose phosphate pathway; D-ribose 5-phosphate from D-ribulose 5-phosphate (non-oxidative stage): step 1/1. Its function is as follows. Catalyzes the reversible conversion of ribose-5-phosphate to ribulose 5-phosphate. The sequence is that of Ribose-5-phosphate isomerase A from Methylorubrum extorquens (strain CM4 / NCIMB 13688) (Methylobacterium extorquens).